We begin with the raw amino-acid sequence, 365 residues long: MDTGVIEGGLNVTLTIRLLMHGKEVGSIIGKKGESVKKMREESGARINISEGNCPERIITLAGPTNAIFKAFAMIIDKLEEDISSSMTNSTAASRPPVTLRLVVPASQCGSLIGKGGCKIKEIRESTGAQVQVAGDMLPNSTERAITIAGIPQSIIECVKQICVVMLETLSQSPPKGVTIPYRPKPSSSPVIFAGGQDRYSTGSDSASFPHTTPSMCLNPDLEGPPLEAYTIQGQYAIPQPDLTKLHQLAMQQSHFPMTHGNTGFSGIESSSPEVKGYWGLDASAQTTSHELTIPNDLIGCIIGRQGAKINEIRQMSGAQIKIANPVEGSTDRQVTITGSAASISLAQYLINVRLSSETGGMGSS.

2 KH domains span residues 13–75 (TLTI…FAMI) and 97–162 (PVTL…VKQI). Lys115 is covalently cross-linked (Glycyl lysine isopeptide (Lys-Gly) (interchain with G-Cter in SUMO2)). At Ser173 the chain carries Phosphoserine. Lys185 is covalently cross-linked (Glycyl lysine isopeptide (Lys-Gly) (interchain with G-Cter in SUMO2)). Phosphoserine is present on residues Ser189 and Ser272. The KH 3 domain maps to 287-351 (TTSHELTIPN…ASISLAQYLI (65 aa)). Lys322 is covalently cross-linked (Glycyl lysine isopeptide (Lys-Gly) (interchain with G-Cter in SUMO2)). Residues Ser364 and Ser365 each carry the phosphoserine modification.

In terms of assembly, identified in a mRNP complex, at least composed of DHX9, DDX3X, ELAVL1, HNRNPU, IGF2BP1, ILF3, PABPC1, PCBP2, PTBP2, STAU1, STAU2, SYNCRIP and YBX1. Interacts with IFIH1 and RNF135. Interacts with MAVS (via C-terminus) and ITCH (via WW domains). Interacts with CGAS; preventing the formation of liquid-like droplets in which CGAS is activated. Phosphorylated. The non-phosphorylated form(s) exhibited the strongest poly(rC)-binding activity. In terms of processing, (Microbial infection) Proteolytically cleaved by picornavirus proteinase 3CD. As to expression, detected in all tissues examined.

It is found in the nucleus. The protein resides in the cytoplasm. Functionally, single-stranded nucleic acid binding protein that binds preferentially to oligo dC. Major cellular poly(rC)-binding protein. Also binds poly(rU). Acts as a negative regulator of antiviral signaling. Negatively regulates cellular antiviral responses mediated by MAVS signaling. It acts as an adapter between MAVS and the E3 ubiquitin ligase ITCH, therefore triggering MAVS ubiquitination and degradation. Negativeley regulates the cGAS-STING pathway via interaction with CGAS, preventing the formation of liquid-like droplets in which CGAS is activated. Together with PCBP1, required for erythropoiesis, possibly by regulating mRNA splicing. (Microbial infection) In case of infection by poliovirus, binds to the viral internal ribosome entry site (IRES) and stimulates the IRES-mediated translation. Also plays a role in initiation of viral RNA replication in concert with the viral protein 3CD. The polypeptide is Poly(rC)-binding protein 2 (Homo sapiens (Human)).